Here is a 469-residue protein sequence, read N- to C-terminus: E3 ubiquitin-protein ligase pellino homolog 3 (469 aa).

Residues 1-39 (MVLEGNPEVGSPRTSDLQHRGNKGSCVLSSPGEDAQPGE) are disordered. S11 carries the post-translational modification Phosphoserine.

It belongs to the pellino family. Interacts with TRAF6, MAP3K14 and MAP3K7. Phosphorylated by IRAK1 enhancing its E3 ligase activity. In terms of tissue distribution, highly expressed in brain, heart and testis, and at lower level in kidney, liver, lung, placenta, small intestine, spleen and stomach. Isoform 1 is not expressed in lung.

It catalyses the reaction S-ubiquitinyl-[E2 ubiquitin-conjugating enzyme]-L-cysteine + [acceptor protein]-L-lysine = [E2 ubiquitin-conjugating enzyme]-L-cysteine + N(6)-ubiquitinyl-[acceptor protein]-L-lysine.. It functions in the pathway protein modification; protein ubiquitination. Its function is as follows. E3 ubiquitin ligase catalyzing the covalent attachment of ubiquitin moieties onto substrate proteins. Involved in the TLR and IL-1 signaling pathways via interaction with the complex containing IRAK kinases and TRAF6. Mediates 'Lys-63'-linked polyubiquitination of IRAK1. Can activate AP1/JUN and ELK1. Acts as a regulator of innate immunity by mediating 'Lys-63'-linked polyubiquitination of RIPK2 downstream of NOD1 and NOD2, thereby transforming RIPK2 into a scaffolding protein for downstream effectors, ultimately leading to activation of the NF-kappa-B and MAP kinases signaling. Catalyzes 'Lys-63'-linked polyubiquitination of RIPK2 in parallel of XIAP. This is E3 ubiquitin-protein ligase pellino homolog 3 from Homo sapiens (Human).